The following is a 294-amino-acid chain: Acetylglutamate kinase (294 aa).

Substrate contacts are provided by residues 63–64 (GG), R85, and N188.

Belongs to the acetylglutamate kinase family. ArgB subfamily.

The protein resides in the cytoplasm. It catalyses the reaction N-acetyl-L-glutamate + ATP = N-acetyl-L-glutamyl 5-phosphate + ADP. It functions in the pathway amino-acid biosynthesis; L-arginine biosynthesis; N(2)-acetyl-L-ornithine from L-glutamate: step 2/4. Its function is as follows. Catalyzes the ATP-dependent phosphorylation of N-acetyl-L-glutamate. The polypeptide is Acetylglutamate kinase (Methanococcus vannielii (strain ATCC 35089 / DSM 1224 / JCM 13029 / OCM 148 / SB)).